Reading from the N-terminus, the 433-residue chain is MKWGRLLAFLAMVVVVLGLTISTGPKIWKSIPLGLDLKGGVDLLYAVDTPKGHPLDSTGKAALVRAIEMRVNSLGVSSPIIQLEGRNQLGQDQIRVEVAGVKNQQEAVSVIGATAQLAIYGSAKIDPKTGKIVPVGPPLATGADLKSNAHWVVDQQTGQNAVAIEFKNASLWTSITKRYLQKPIYVFLNGQLLTNPVVEQVMYTGQSEISGGNLTTPQACIDLANELNAGALPYPLTLESETSVGPTLGATSLHRTLIAGVIAVVLIFAFMIAAYRMAGLIADIALVAYGYLTLLTFAGLHVVLTLSGLAALILGVGIAVDANIITYERIKDEVRNGRSLRSAVRIGNKNAFRTIVDSNATTFIAGLIMYIFGGEGDVRGFAVALMVGIIVSLLTAVLFARAMLLTFTAAQAVKNPWWYGAPRGVVKSREAKV.

A run of 6 helical transmembrane segments spans residues 7-27, 257-277, 278-298, 300-320, 354-374, and 380-400; these read LAFLAMVVVVLGLTISTGPKI, LIAGVIAVVLIFAFMIAAYRM, AGLIADIALVAYGYLTLLTFA, LHVVLTLSGLAALILGVGIAV, TIVDSNATTFIAGLIMYIFGG, and GFAVALMVGIIVSLLTAVLFA.

The protein belongs to the SecD/SecF family. SecD subfamily. As to quaternary structure, forms a complex with SecF. Part of the essential Sec protein translocation apparatus which comprises SecA, SecYEG and auxiliary proteins SecDF. Other proteins may also be involved.

It localises to the cell membrane. Part of the Sec protein translocase complex. Interacts with the SecYEG preprotein conducting channel. SecDF uses the proton motive force (PMF) to complete protein translocation after the ATP-dependent function of SecA. This chain is Protein translocase subunit SecD, found in Alicyclobacillus acidocaldarius subsp. acidocaldarius (strain ATCC 27009 / DSM 446 / BCRC 14685 / JCM 5260 / KCTC 1825 / NBRC 15652 / NCIMB 11725 / NRRL B-14509 / 104-IA) (Bacillus acidocaldarius).